The following is a 710-amino-acid chain: Phosphoribosylformylglycinamidine synthase subunit PurL (710 aa).

Residue H36 is part of the active site. ATP is bound by residues Y39 and K80. E82 lines the Mg(2+) pocket. Substrate is bound by residues 83-86 (SHNH) and R105. H84 functions as the Proton acceptor in the catalytic mechanism. A Mg(2+)-binding site is contributed by D106. Substrate is bound at residue Q226. D252 lines the Mg(2+) pocket. Position 294–296 (294–296 (ETQ)) interacts with substrate. D470 and G507 together coordinate ATP. S510 is a binding site for substrate.

It belongs to the FGAMS family. As to quaternary structure, monomer. Part of the FGAM synthase complex composed of 1 PurL, 1 PurQ and 2 PurS subunits.

Its subcellular location is the cytoplasm. The enzyme catalyses N(2)-formyl-N(1)-(5-phospho-beta-D-ribosyl)glycinamide + L-glutamine + ATP + H2O = 2-formamido-N(1)-(5-O-phospho-beta-D-ribosyl)acetamidine + L-glutamate + ADP + phosphate + H(+). The protein operates within purine metabolism; IMP biosynthesis via de novo pathway; 5-amino-1-(5-phospho-D-ribosyl)imidazole from N(2)-formyl-N(1)-(5-phospho-D-ribosyl)glycinamide: step 1/2. Its function is as follows. Part of the phosphoribosylformylglycinamidine synthase complex involved in the purines biosynthetic pathway. Catalyzes the ATP-dependent conversion of formylglycinamide ribonucleotide (FGAR) and glutamine to yield formylglycinamidine ribonucleotide (FGAM) and glutamate. The FGAM synthase complex is composed of three subunits. PurQ produces an ammonia molecule by converting glutamine to glutamate. PurL transfers the ammonia molecule to FGAR to form FGAM in an ATP-dependent manner. PurS interacts with PurQ and PurL and is thought to assist in the transfer of the ammonia molecule from PurQ to PurL. This Sulfolobus acidocaldarius (strain ATCC 33909 / DSM 639 / JCM 8929 / NBRC 15157 / NCIMB 11770) protein is Phosphoribosylformylglycinamidine synthase subunit PurL.